An 889-amino-acid polypeptide reads, in one-letter code: Oxysterol-binding protein-related protein 8 (889 aa).

Position 1 is an N-acetylmethionine (Met1). Residues 1 to 129 (MEAALADGEP…SLKVQKKNYR (129 aa)) are disordered. Phosphoserine occurs at positions 14, 65, and 68. Over residues 62-71 (PSLSPASLHS) the composition is skewed to polar residues. Composition is skewed to basic and acidic residues over residues 73 to 88 (GFER…KDDS), 95 to 109 (SKSE…EKDS), and 116 to 129 (TKKE…KNYR). The PH domain occupies 148–265 (VIVMADWLKI…WMDALELALK (118 aa)). Phosphoserine occurs at positions 314, 328, and 342. Residues 321-336 (FKDQDLYSDKSDKEND) show a composition bias toward basic and acidic residues. The interval 321–374 (FKDQDLYSDKSDKENDPEHDESDNEVLGKSEESDTDTSERQDDSYIDPEPVEPL) is disordered. Over residues 346 to 363 (VLGKSEESDTDTSERQDD) the composition is skewed to basic and acidic residues. Residues 420–425 (LSRVVL), 482–485 (KPYN), and 514–515 (HH) each bind a 1,2-diacyl-sn-glycero-3-phospho-(1D-myo-inositol 4-phosphate). A 1,2-diacyl-sn-glycero-3-phospho-L-serine contacts are provided by residues 420–425 (LSRVVL) and Asn485. Residue Ser540 coordinates a 1,2-diacyl-sn-glycero-3-phospho-L-serine. A 1,2-diacyl-sn-glycero-3-phospho-(1D-myo-inositol 4-phosphate) is bound by residues Lys706, Glu710, and Arg714. The segment at 772-823 (HRTPMVSVPKMKHKPTRQQKKVVKGYSSPEPDIQDSSGSEAQSVKPSTRRKK) is disordered. The span at 781–794 (KMKHKPTRQQKKVV) shows a compositional bias: basic residues. The span at 805-817 (QDSSGSEAQSVKP) shows a compositional bias: polar residues. Phosphoserine is present on residues Ser807, Ser808, Ser810, and Ser814. The helical transmembrane segment at 871-888 (YFVIFLLILLQVIINFIF) threads the bilayer.

It belongs to the OSBP family. In terms of assembly, interacts with SPAG5. Interacts with NUP62. In terms of tissue distribution, widely expressed. Most abundant in liver, spleen, kidney, brain and adipose tissue.

The protein resides in the endoplasmic reticulum membrane. The protein localises to the nucleus membrane. Lipid transporter involved in lipid countertransport between the endoplasmic reticulum and the plasma membrane: specifically exchanges phosphatidylserine with phosphatidylinositol 4-phosphate (PI4P), delivering phosphatidylserine to the plasma membrane in exchange for PI4P, which is degraded by the SAC1/SACM1L phosphatase in the endoplasmic reticulum. Binds phosphatidylserine and PI4P in a mutually exclusive manner. Binds oxysterol, 25-hydroxycholesterol and cholesterol. This is Oxysterol-binding protein-related protein 8 from Mus musculus (Mouse).